We begin with the raw amino-acid sequence, 127 residues long: RutC family protein PYRAB12510 (127 aa).

The protein belongs to the RutC family.

The protein is RutC family protein PYRAB12510 of Pyrococcus abyssi (strain GE5 / Orsay).